Consider the following 221-residue polypeptide: MASFTVGIVVFPGSNCDRDVSWALEGCLDIKTKFLWHESSDLNDVDSIVLPGGFSYGDYLRCGAIARFSPLINSLHDFIKSGRRVLGICNGFQILTESGFLPGALVANKNLNFICDDVDLNVITSKGGWFQKLNENQNIKLPIAHGEGCYHCDQDTLKRLVDNDLIALKYKTNPNGSTSDIAGITNEKGNVLGLMPHPERACDESIGGIDGLYTLRSLITQ.

In terms of domain architecture, Glutamine amidotransferase type-1 spans Thr-5–Gln-221. Cys-89 acts as the Nucleophile in catalysis. Active-site residues include His-197 and Glu-199.

As to quaternary structure, part of the FGAM synthase complex composed of 1 PurL, 1 PurQ and 2 PurS subunits.

It localises to the cytoplasm. The catalysed reaction is N(2)-formyl-N(1)-(5-phospho-beta-D-ribosyl)glycinamide + L-glutamine + ATP + H2O = 2-formamido-N(1)-(5-O-phospho-beta-D-ribosyl)acetamidine + L-glutamate + ADP + phosphate + H(+). It carries out the reaction L-glutamine + H2O = L-glutamate + NH4(+). The protein operates within purine metabolism; IMP biosynthesis via de novo pathway; 5-amino-1-(5-phospho-D-ribosyl)imidazole from N(2)-formyl-N(1)-(5-phospho-D-ribosyl)glycinamide: step 1/2. Part of the phosphoribosylformylglycinamidine synthase complex involved in the purines biosynthetic pathway. Catalyzes the ATP-dependent conversion of formylglycinamide ribonucleotide (FGAR) and glutamine to yield formylglycinamidine ribonucleotide (FGAM) and glutamate. The FGAM synthase complex is composed of three subunits. PurQ produces an ammonia molecule by converting glutamine to glutamate. PurL transfers the ammonia molecule to FGAR to form FGAM in an ATP-dependent manner. PurS interacts with PurQ and PurL and is thought to assist in the transfer of the ammonia molecule from PurQ to PurL. This Prochlorococcus marinus subsp. pastoris (strain CCMP1986 / NIES-2087 / MED4) protein is Phosphoribosylformylglycinamidine synthase subunit PurQ.